A 349-amino-acid chain; its full sequence is Neutral protease 2 homolog ACLA_052720 (349 aa).

The N-terminal stretch at 1–19 (MQLTVLASAILALAQGALA) is a signal peptide. Residues 20–172 (IPAKAPALDV…PAAINLLDRR (153 aa)) constitute a propeptide that is removed on maturation. 2 disulfides stabilise this stretch: cysteine 178/cysteine 250 and cysteine 257/cysteine 275. Zn(2+) is bound at residue histidine 300. The active site involves glutamate 301. Zn(2+) is bound by residues histidine 304 and aspartate 315.

The protein belongs to the peptidase M35 family. The cofactor is Zn(2+).

It localises to the secreted. It catalyses the reaction Preferential cleavage of bonds with hydrophobic residues in P1'. Also 3-Asn-|-Gln-4 and 8-Gly-|-Ser-9 bonds in insulin B chain.. Functionally, secreted metalloproteinase that allows assimilation of proteinaceous substrates. Shows high activities on basic nuclear substrates such as histone and protamine. The polypeptide is Neutral protease 2 homolog ACLA_052720 (Aspergillus clavatus (strain ATCC 1007 / CBS 513.65 / DSM 816 / NCTC 3887 / NRRL 1 / QM 1276 / 107)).